Reading from the N-terminus, the 412-residue chain is Cathepsin D (412 aa).

Residues methionine 1–alanine 20 form the signal peptide. Residues leucine 21–glutamate 64 constitute a propeptide, activation peptide. O-linked (GalNAc...) threonine glycosylation is present at threonine 63. The Peptidase A1 domain occupies tyrosine 79 to alanine 407. Intrachain disulfides connect cysteine 91–cysteine 160 and cysteine 110–cysteine 117. The active site involves aspartate 97. N-linked (GlcNAc...) asparagine glycosylation is found at asparagine 134 and asparagine 263. A disulfide bridge links cysteine 286 with cysteine 290. Aspartate 295 is an active-site residue. Cysteine 329 and cysteine 366 form a disulfide bridge.

This sequence belongs to the peptidase A1 family. In terms of assembly, consists of a light chain and a heavy chain. Interacts with ADAM30; this leads to activation of CTSD. Interacts with GRN; stabilizes CTSD; increases its proteolytic activity. Post-translationally, N- and O-glycosylated. In terms of processing, undergoes proteolytic cleavage and activation by ADAM30. As well as the major heavy chain which starts at Leu-169, 2 minor forms starting at Gly-170 and Gly-171 have been identified. An additional form starting at Ala-168 has also been identified. In terms of tissue distribution, expressed in the aorta extracellular space (at protein level). Expressed in liver (at protein level).

The protein localises to the lysosome. Its subcellular location is the melanosome. It localises to the secreted. It is found in the extracellular space. The enzyme catalyses Specificity similar to, but narrower than, that of pepsin A. Does not cleave the 4-Gln-|-His-5 bond in B chain of insulin.. Its function is as follows. Acid protease active in intracellular protein breakdown. Plays a role in APP processing following cleavage and activation by ADAM30 which leads to APP degradation. Involved in the pathogenesis of several diseases such as breast cancer and possibly Alzheimer disease. The chain is Cathepsin D (CTSD) from Homo sapiens (Human).